A 208-amino-acid polypeptide reads, in one-letter code: Protein-L-isoaspartate O-methyltransferase (208 aa).

Residue Ser59 is part of the active site.

It belongs to the methyltransferase superfamily. L-isoaspartyl/D-aspartyl protein methyltransferase family.

The protein localises to the cytoplasm. It catalyses the reaction [protein]-L-isoaspartate + S-adenosyl-L-methionine = [protein]-L-isoaspartate alpha-methyl ester + S-adenosyl-L-homocysteine. Functionally, catalyzes the methyl esterification of L-isoaspartyl residues in peptides and proteins that result from spontaneous decomposition of normal L-aspartyl and L-asparaginyl residues. It plays a role in the repair and/or degradation of damaged proteins. The sequence is that of Protein-L-isoaspartate O-methyltransferase from Photorhabdus laumondii subsp. laumondii (strain DSM 15139 / CIP 105565 / TT01) (Photorhabdus luminescens subsp. laumondii).